We begin with the raw amino-acid sequence, 605 residues long: Zinc metalloproteinase nas-34 (605 aa).

Positions 1–19 are cleaved as a signal peptide; that stretch reads MVSYWPVLIVLCLLPICHA. The propeptide occupies 20–124; sequence KSYFADFVNG…EFLYAIRGKR (105 aa). The Peptidase M12A domain maps to 124–322; it reads RSMTSFLSER…VKRINFAYCN (199 aa). Disulfide bonds link Cys-165–Cys-321 and Cys-191–Cys-211. His-219 provides a ligand contact to Zn(2+). Glu-220 is an active-site residue. Residues His-223 and His-229 each contribute to the Zn(2+) site. In terms of domain architecture, EGF-like spans 317–357; sequence NFAYCNSTCSNYLDCQNGGYINPNDCNNCKCPPGFGGQLCD. The N-linked (GlcNAc...) asparagine glycan is linked to Asn-322. Cystine bridges form between Cys-325-Cys-345, Cys-347-Cys-356, Cys-366-Cys-388, and Cys-415-Cys-436. Residues 366–469 form the CUB domain; that stretch reads CGAGDITATS…ARFSLNYRYD (104 aa). Residues 479–526 form a disordered region; that stretch reads TTTSTTTTTAPITVPTVSPTTTTTRQTTTTARTSTTTTTTQAPPTTTT. One can recognise a TSP type-1 domain in the interval 525–566; that stretch reads TTSTSQCASWSACSAQCGGCGTQSRRCGTYVETVYCNTNPCT. Cystine bridges form between Cys-531–Cys-551, Cys-537–Cys-560, and Cys-541–Cys-565.

Zn(2+) is required as a cofactor. In terms of tissue distribution, expressed in hypodermal cells. First expressed in the dorsal and lateral surface area of the middle and posterior region of embryos. At later stages, it localizes to lateral surface regions, probably corresponding to hypodermal seam cells. In L1 larvae, it is expressed in seam cells and in a few cells anterior to the nerve ring.

It localises to the secreted. Metalloprotease. Required for normal hatching and migration of neuroblasts. May act by degrading eggshell proteins at hatching. The protein is Zinc metalloproteinase nas-34 (hch-1) of Caenorhabditis elegans.